The primary structure comprises 174 residues: Glutaredoxin-C5, chloroplastic (174 aa).

A chloroplast-targeting transit peptide spans 1–51 (MAVTAFNTLKLVSSSLDPIPSVSCSSYSFSLIYVGSPYKRCLKQSCSVRAM). Thr-52 bears the N-acetylthreonine mark. Residue Cys-90 is modified to S-glutathionyl cysteine; partial. An intrachain disulfide couples Cys-90 to Cys-93. Residues 93–171 (CTEVKTLFKR…LMLAEANGKN (79 aa)) form the Glutaredoxin domain. Glutathione is bound by residues Val-135, Cys-148, and Thr-149. Position 148 is an S-glutathionyl cysteine; partial (Cys-148).

Belongs to the glutaredoxin family. CPYC subfamily. Monomeric apoprotein and homodimeric holoprotein containing a [2Fe-2S] cluster. No in vitro interactions with SUFE1, BOLA1, BOLA2 or BOLA4. In terms of processing, glutathionylated.

It localises to the plastid. The protein localises to the chloroplast. Its function is as follows. Has a glutathione-disulfide oxidoreductase activity in the presence of NADPH and glutathione reductase. Reduces low molecular weight disulfides and proteins. Can assemble a [2Fe-2S] cluster, but cannot transfer it to an apoferredoxin. In Arabidopsis thaliana (Mouse-ear cress), this protein is Glutaredoxin-C5, chloroplastic.